The sequence spans 354 residues: tRNA-specific 2-thiouridylase MnmA (354 aa).

ATP-binding positions include 6 to 13 (LLSGGVDS) and L33. Residue C100 is the Nucleophile of the active site. An intrachain disulfide couples C100 to C195. ATP is bound at residue G123. The interaction with tRNA stretch occupies residues 145–147 (KDQ). C195 functions as the Cysteine persulfide intermediate in the catalytic mechanism.

The protein belongs to the MnmA/TRMU family.

It localises to the cytoplasm. The enzyme catalyses S-sulfanyl-L-cysteinyl-[protein] + uridine(34) in tRNA + AH2 + ATP = 2-thiouridine(34) in tRNA + L-cysteinyl-[protein] + A + AMP + diphosphate + H(+). In terms of biological role, catalyzes the 2-thiolation of uridine at the wobble position (U34) of tRNA, leading to the formation of s(2)U34. In Borrelia hermsii (strain HS1 / DAH), this protein is tRNA-specific 2-thiouridylase MnmA.